The chain runs to 182 residues: ATP-dependent protease subunit HslV (182 aa).

Residue T12 is part of the active site. The Na(+) site is built by A167, C170, and T173.

Belongs to the peptidase T1B family. HslV subfamily. As to quaternary structure, a double ring-shaped homohexamer of HslV is capped on each side by a ring-shaped HslU homohexamer. The assembly of the HslU/HslV complex is dependent on binding of ATP.

The protein resides in the cytoplasm. The enzyme catalyses ATP-dependent cleavage of peptide bonds with broad specificity.. Allosterically activated by HslU binding. In terms of biological role, protease subunit of a proteasome-like degradation complex believed to be a general protein degrading machinery. This chain is ATP-dependent protease subunit HslV, found in Paramagnetospirillum magneticum (strain ATCC 700264 / AMB-1) (Magnetospirillum magneticum).